The sequence spans 101 residues: MMLEHVLVLSAYLFSIGIYGLITSRNMVRALMCLELILNAVNMNLVTFSDLFDSRQLKGDIFSIFVIAIAAAEAAIGPAIVSSIHRNRKSTRINQSNLLNK.

Helical transmembrane passes span 2-22 (MLEH…YGLI), 32-52 (MCLE…SDLF), and 61-81 (IFSI…PAIV).

Belongs to the complex I subunit 4L family. NDH is composed of at least 16 different subunits, 5 of which are encoded in the nucleus.

It is found in the plastid. Its subcellular location is the chloroplast thylakoid membrane. The catalysed reaction is a plastoquinone + NADH + (n+1) H(+)(in) = a plastoquinol + NAD(+) + n H(+)(out). It catalyses the reaction a plastoquinone + NADPH + (n+1) H(+)(in) = a plastoquinol + NADP(+) + n H(+)(out). In terms of biological role, NDH shuttles electrons from NAD(P)H:plastoquinone, via FMN and iron-sulfur (Fe-S) centers, to quinones in the photosynthetic chain and possibly in a chloroplast respiratory chain. The immediate electron acceptor for the enzyme in this species is believed to be plastoquinone. Couples the redox reaction to proton translocation, and thus conserves the redox energy in a proton gradient. In Chloranthus spicatus (Chulantree), this protein is NAD(P)H-quinone oxidoreductase subunit 4L, chloroplastic.